Reading from the N-terminus, the 269-residue chain is 5'-nucleotidase SurE (269 aa).

The a divalent metal cation site is built by D11, D12, S43, and N101.

Belongs to the SurE nucleotidase family. It depends on a divalent metal cation as a cofactor.

Its subcellular location is the cytoplasm. The enzyme catalyses a ribonucleoside 5'-phosphate + H2O = a ribonucleoside + phosphate. Functionally, nucleotidase that shows phosphatase activity on nucleoside 5'-monophosphates. This chain is 5'-nucleotidase SurE, found in Synechococcus sp. (strain CC9605).